The sequence spans 196 residues: Probable malonic semialdehyde reductase RutE (196 aa).

It belongs to the nitroreductase family. HadB/RutE subfamily. It depends on FMN as a cofactor.

The enzyme catalyses 3-hydroxypropanoate + NADP(+) = 3-oxopropanoate + NADPH + H(+). In terms of biological role, may reduce toxic product malonic semialdehyde to 3-hydroxypropionic acid, which is excreted. This Klebsiella pneumoniae (strain 342) protein is Probable malonic semialdehyde reductase RutE.